The sequence spans 405 residues: Pentatricopeptide repeat-containing protein At1g11630, mitochondrial (405 aa).

The transit peptide at methionine 1–histidine 72 directs the protein to the mitochondrion. PPR repeat units follow at residues aspartate 74–proline 108, serine 110–arginine 144, threonine 145–proline 180, aspartate 181–proline 215, threonine 216–valine 250, glycine 251–proline 285, asparagine 286–proline 320, aspartate 321–proline 355, and serine 356–lysine 386.

The protein belongs to the PPR family. P subfamily.

It localises to the mitochondrion. This chain is Pentatricopeptide repeat-containing protein At1g11630, mitochondrial, found in Arabidopsis thaliana (Mouse-ear cress).